Here is a 186-residue protein sequence, read N- to C-terminus: MSFLTNFLLGLGLAMDAFAVSMSSGTTIRPFRVSDALKLAVFFGSFQAMMPVLGWIGGSTVSSFVSDYAPWIAFLLLAFIGCKMIYEALYGDQDGKVNSLNYSVLFLLAVATSIDALAVGMSFAFLGTPILEPVIIIGCVTFVMSFCGAILGYRLGHFFEHEVEILGGLILIGLGGKILAEHMLWI.

The next 6 membrane-spanning stretches (helical) occupy residues 1 to 21 (MSFLTNFLLGLGLAMDAFAVS), 39 to 59 (LAVFFGSFQAMMPVLGWIGGS), 61 to 81 (VSSFVSDYAPWIAFLLLAFIG), 102 to 122 (YSVLFLLAVATSIDALAVGMS), 134 to 156 (VIIIGCVTFVMSFCGAILGYRLG), and 165 to 185 (ILGGLILIGLGGKILAEHMLW).

The protein belongs to the MntP (TC 9.B.29) family.

It localises to the cell membrane. In terms of biological role, probably functions as a manganese efflux pump. This chain is Putative manganese efflux pump MntP, found in Methanosarcina acetivorans (strain ATCC 35395 / DSM 2834 / JCM 12185 / C2A).